Reading from the N-terminus, the 462-residue chain is MSYYPPPSGYPGGPPAYPPPQQQQQQQQQYPSYGAPPPQYPPQNNYAPPSYPPPGQYGHPPQPGYPPHSSPYGHTPSPQPPYGHPPPQHPPHQPPHRPPPSPGYGHLPPSTPNSGPAFHGQPGIATVNNNDYVHGNHSAPPPPPSGSVAFGHGAPQGYSYQYSNCTGKRKALLIGINYFGQRGQLRGCINDVKNMSTYLNQSFNYAREDMVILTDDQQNPMSQPTKANILRAMHWLVKDARPNDSLFFHYSGHGGQTPDLDGDEDDGYDEVIYPVDFRNAGHIVDDEMHRIMVRPLPAGVRLTAIFDSCHSGSALDLPYIYSTQGVLKEPNLAKEAGQGLLGVVSAYARGDMGSMVSTAMGFIKKATRGEETYQRAKQTKTSPADVIMWSGSKDVQTSADATINGQATGALSWAFITALKKNPQQSYVQLLNSIRDELASKYSQKPQLSCSHPLDTNLLYVM.

Residues 1–21 are compositionally biased toward pro residues; it reads MSYYPPPSGYPGGPPAYPPPQ. Residues 1–150 are disordered; the sequence is MSYYPPPSGY…PPPPSGSVAF (150 aa). Over residues 22 to 33 the composition is skewed to low complexity; it reads QQQQQQQQYPSY. 2 stretches are compositionally biased toward pro residues: residues 49–69 and 77–102; these read PSYPPPGQYGHPPQPGYPPHS and SPQPPYGHPPPQHPPHQPPHRPPPSP. Catalysis depends on residues His253 and Cys309.

This sequence belongs to the peptidase C14B family.

Functionally, involved in cell death (apoptosis). This is Metacaspase-1 (MCA1) from Coccidioides immitis (strain RS) (Valley fever fungus).